Consider the following 387-residue polypeptide: Cobalt-precorrin-5B C(1)-methyltransferase (387 aa).

The protein belongs to the CbiD family.

It carries out the reaction Co-precorrin-5B + S-adenosyl-L-methionine = Co-precorrin-6A + S-adenosyl-L-homocysteine. It functions in the pathway cofactor biosynthesis; adenosylcobalamin biosynthesis; cob(II)yrinate a,c-diamide from sirohydrochlorin (anaerobic route): step 6/10. Catalyzes the methylation of C-1 in cobalt-precorrin-5B to form cobalt-precorrin-6A. The sequence is that of Cobalt-precorrin-5B C(1)-methyltransferase from Desulfitobacterium hafniense (strain Y51).